Reading from the N-terminus, the 142-residue chain is MAKKVQAYIKLQVSAGMANPSPPVGPALGQQGVNIMEFCKAFNAKTESVEKGLPIPVVITVIADRSFTFVTKTPPAAVLLKKAAGVKSGSGKPNKEKVGKITSAQVREIAETKAADLTGADVEAMMRSIAGTARSMGLVVED.

It belongs to the universal ribosomal protein uL11 family. Part of the ribosomal stalk of the 50S ribosomal subunit. Interacts with L10 and the large rRNA to form the base of the stalk. L10 forms an elongated spine to which L12 dimers bind in a sequential fashion forming a multimeric L10(L12)X complex. In terms of processing, one or more lysine residues are methylated.

Forms part of the ribosomal stalk which helps the ribosome interact with GTP-bound translation factors. In Proteus vulgaris, this protein is Large ribosomal subunit protein uL11.